The chain runs to 197 residues: TLE family member 5 (197 aa).

Positions 166 to 197 (LSALGSQAHLSKEDKNGHDGDTHQEDDGEKSD) are CCN domain. The tract at residues 174-197 (HLSKEDKNGHDGDTHQEDDGEKSD) is disordered. Basic and acidic residues predominate over residues 175-197 (LSKEDKNGHDGDTHQEDDGEKSD). Phosphoserine is present on Ser-196.

It belongs to the WD repeat Groucho/TLE family. In terms of assembly, homooligomer and heterooligomer with other family members. Binds TCF7. Binds the NF-kappa-B subunit RELA. Interacts with PHF12. Interacts (via Q domain) with SIX3. Interacts with SIX6. Ubiquitinated by XIAP/BIRC4. In terms of tissue distribution, found predominantly in muscle, heart and Placenta. In fetal tissues, abundantly expressed in the heart, lung, kidney, brain and liver.

It localises to the nucleus. Transcriptional corepressor. Acts as a dominant repressor towards other family members. Inhibits NF-kappa-B-regulated gene expression. May be required for the initiation and maintenance of the differentiated state. Essential for the transcriptional repressor activity of SIX3 during retina and lens development. The polypeptide is TLE family member 5 (Homo sapiens (Human)).